Here is a 418-residue protein sequence, read N- to C-terminus: Neurotensin receptor type 1 (418 aa).

The Extracellular portion of the chain corresponds to 1–67 (MRLNSSAPGT…TDIYSKVLVT (67 aa)). N-linked (GlcNAc...) asparagine glycans are attached at residues Asn-4, Asn-37, and Asn-41. A helical transmembrane segment spans residues 68–88 (AVYLALFVVGTVGNTVTAFTL). Residues 89–102 (ARKKSLQSLQSTVH) are Cytoplasmic-facing. Residues 103–122 (YHLGSLALSDLLTLLLAMPV) traverse the membrane as a helical segment. Over 123-142 (ELYNFIWVHHPWAFGDAGCR) the chain is Extracellular. Cys-141 and Cys-224 are oxidised to a cystine. A helical membrane pass occupies residues 143-164 (GYYFLRDACTYATALNVASLSV). Over 165–184 (ERYLAICHPFKAKTLMSRSR) the chain is Cytoplasmic. Residues 185-205 (TKKFISAIWLASALLAVPMLF) form a helical membrane-spanning segment. Residues 206-234 (TMGEQNRSADGQHAGGLVCTPTIHTATVK) lie on the Extracellular side of the membrane. Residues 235–259 (VVIQVNTFMSFIFPMVVISVLNTII) traverse the membrane as a helical segment. At 260–303 (ANKLTVMVRQAAEQGQVCTVGGEHSTFSMAIEPGRVQALRHGVR) the chain is on the cytoplasmic side. A helical transmembrane segment spans residues 304–325 (VLRAVVIAFVVCWLPYHVRRLM). Residues 321–344 (VRRLMFCYISDEQWTPFLYDFYHY) are neurotensin binding. The Extracellular portion of the chain corresponds to 326 to 343 (FCYISDEQWTPFLYDFYH). A helical membrane pass occupies residues 344-364 (YFYMVTNALFYVSSTINPILY). Over 365-418 (NLVSANFRHIFLATLACLCPVWRRRRKRPAFSRKADSVSSNHTLSSNATRETLY) the chain is Cytoplasmic. Residues Cys-381 and Cys-383 are each lipidated (S-palmitoyl cysteine).

It belongs to the G-protein coupled receptor 1 family. Neurotensin receptor subfamily. NTSR1 sub-subfamily. In terms of assembly, interacts (palmitoylated form) with GNA11. Post-translationally, N-glycosylated. In terms of processing, palmitoylated; this is required for normal localization at membrane rafts and normal GNA11-mediated activation of down-stream signaling cascades. The palmitoylation level increases in response to neurotensin treatment. In terms of tissue distribution, expressed in prostate (at protein level). Detected in colon and peripheral blood mononuclear cells. Detected at very low levels in brain.

Its subcellular location is the cell membrane. The protein localises to the membrane raft. Functionally, G-protein coupled receptor for the tridecapeptide neurotensin (NTS). Signaling is effected via G proteins that activate a phosphatidylinositol-calcium second messenger system. Signaling leads to the activation of downstream MAP kinases and protects cells against apoptosis. This chain is Neurotensin receptor type 1 (NTSR1), found in Homo sapiens (Human).